The primary structure comprises 1011 residues: Cell division cycle-associated protein 2 (1011 aa).

Residues 1-22 show a composition bias toward polar residues; the sequence is MDTCSQESEPLQTKESPINNAG. Positions 1 to 26 are disordered; sequence MDTCSQESEPLQTKESPINNAGKTPL. Ser125, Ser130, Ser209, Ser293, and Ser310 each carry phosphoserine. Phosphothreonine is present on Thr313. Positions 380-440 constitute a PP1-binding domain; it reads KRKRVTFGED…PEWLPQPNFD (61 aa). Phosphoserine is present on residues Ser391 and Ser398. Disordered stretches follow at residues 395 to 438 and 522 to 544; these read LDES…PQPN and PCKE…KVLP. Thr403 bears the Phosphothreonine mark. The segment covering 418-431 has biased composition (low complexity); sequence SSLSPPLLEQSPVP. Ser428 is modified (phosphoserine). Residues 522 to 543 are compositionally biased toward basic and acidic residues; the sequence is PCKEKKTNRRKSQESKHADKVL. Phosphoserine occurs at positions 583, 702, and 747. Lys753 is covalently cross-linked (Glycyl lysine isopeptide (Lys-Gly) (interchain with G-Cter in SUMO2)). The span at 790-803 shows a compositional bias: basic and acidic residues; that stretch reads DQRKVSKSQGEDLG. 2 disordered regions span residues 790–835 and 896–1011; these read DQRK…GLHL and GLVW…LSEN. The segment covering 931 to 945 has biased composition (polar residues); sequence SSRQDPCTLPSTSSE. Ser967 is subject to Phosphoserine. Polar residues predominate over residues 968-983; the sequence is FCTSTLANPKSTTQSR. Residues 993-1011 show a composition bias toward basic and acidic residues; it reads QKRENTLQETSRESDLSEN.

As to quaternary structure, interacts with PPP1CC. In terms of processing, phosphorylated by CDK1. May regulate its subcellular location.

Its subcellular location is the nucleus. Functionally, regulator of chromosome structure during mitosis required for condensin-depleted chromosomes to retain their compact architecture through anaphase. Acts by mediating the recruitment of phopsphatase PP1-gamma subunit (PPP1CC) to chromatin at anaphase and into the following interphase. At anaphase onset, its association with chromatin targets a pool of PPP1CC to dephosphorylate substrates. The protein is Cell division cycle-associated protein 2 (CDCA2) of Bos taurus (Bovine).